The following is a 200-amino-acid chain: Holliday junction branch migration complex subunit RuvA (200 aa).

The segment at 1–63 (MYAYVKGKLT…EDAQLLYGFS (63 aa)) is domain I. Residues 64–142 (SEEEKDMFLS…ITEEDSDSLL (79 aa)) form a domain II region. Residues 143 to 149 (QVDATST) form a flexible linker region. The segment at 150 to 200 (VQDQFVQEAMLALEALGYSKRELAKVEKTLNKNKYDSVDEAVKAGLQLVVS) is domain III.

Belongs to the RuvA family. As to quaternary structure, homotetramer. Forms an RuvA(8)-RuvB(12)-Holliday junction (HJ) complex. HJ DNA is sandwiched between 2 RuvA tetramers; dsDNA enters through RuvA and exits via RuvB. An RuvB hexamer assembles on each DNA strand where it exits the tetramer. Each RuvB hexamer is contacted by two RuvA subunits (via domain III) on 2 adjacent RuvB subunits; this complex drives branch migration. In the full resolvosome a probable DNA-RuvA(4)-RuvB(12)-RuvC(2) complex forms which resolves the HJ.

The protein resides in the cytoplasm. The RuvA-RuvB-RuvC complex processes Holliday junction (HJ) DNA during genetic recombination and DNA repair, while the RuvA-RuvB complex plays an important role in the rescue of blocked DNA replication forks via replication fork reversal (RFR). RuvA specifically binds to HJ cruciform DNA, conferring on it an open structure. The RuvB hexamer acts as an ATP-dependent pump, pulling dsDNA into and through the RuvAB complex. HJ branch migration allows RuvC to scan DNA until it finds its consensus sequence, where it cleaves and resolves the cruciform DNA. This is Holliday junction branch migration complex subunit RuvA from Staphylococcus aureus (strain USA300).